The primary structure comprises 145 residues: UPF0763 protein CFF8240_1572 (145 aa).

This sequence belongs to the UPF0763 family.

This chain is UPF0763 protein CFF8240_1572, found in Campylobacter fetus subsp. fetus (strain 82-40).